The primary structure comprises 224 residues: Pleckstrin homology domain-containing family B member 2 (224 aa).

The region spanning 2–109 is the PH domain; sequence AFVKSGWLLR…WKIALQDART (108 aa). Lys-20 contributes to the a 1,2-diacyl-sn-glycero-3-phospho-L-serine binding site.

It is found in the recycling endosome membrane. In terms of biological role, involved in retrograde transport of recycling endosomes. The polypeptide is Pleckstrin homology domain-containing family B member 2 (PLEKHB2) (Gallus gallus (Chicken)).